A 493-amino-acid polypeptide reads, in one-letter code: MSLLKMEYNLYAELKKMTCGQPLSLFNEDGDFVEVEPGSSFKFLIPKGFYASPSVKTSLVFETLTTTDNKITSINPTNAPKLYPLQRKVVSEVVSNMRKMIESKRPLYITLHLACGFGKTITTCYLMATHGRKTVICVPNKMLIHQWKTQVEAVGLEHKISIDGVSSLLKELKTQSPDVLIVVSRHLTNDAFCKYINKHYDLFILDESHTYNLMNNTAVTRFLAYYPPMMCYFLTATPRPANRIYCNSIINIAKLSDLKKTIYAVDSFFEPYSTDNIRHMIKRLDGPSNKYHIYTEKLLSVDEPRNQLILDTLVEEFKSGTINRILVITKLREHMVFFYKRLLDLFGPEVVFIGDAQNRRTPDMVKSIKELNRFIFVSTLFYSGTGLDIPSLDSLFICSAVINNMQIEQLLGRVCRETELLDRTVYVFPSTSIKEIKYMIGNFMQRIISLSVDKLGFKQKSYRKHQESDPTSVCTTSSREERVLNRIFNSQNR.

The 157-residue stretch at 100–256 (MIESKRPLYI…NSIINIAKLS (157 aa)) folds into the Helicase ATP-binding domain. 113-120 (LACGFGKT) provides a ligand contact to ATP. A DESH box motif is present at residues 206-209 (DESH). The Helicase C-terminal domain maps to 309–456 (ILDTLVEEFK…IISLSVDKLG (148 aa)).

It belongs to the helicase family. Poxviruses subfamily. In terms of assembly, interacts with OPG087. Might be part of a transcription complex composed at least of OPG087, OPG110, and OPG145.

It is found in the virion. DNA helicase which seems to act as a postreplicative transcription termination factor. Involved in ATP-dependent release of nascent RNA. Forms a stable complex with single-stranded DNA, and to a lesser extent RNA. This Homo sapiens (Human) protein is Transcript termination protein OPG145 (OPG145).